A 435-amino-acid polypeptide reads, in one-letter code: Histidinol dehydrogenase (435 aa).

Positions 131, 189, and 212 each coordinate NAD(+). S238, Q260, and H263 together coordinate substrate. Zn(2+) contacts are provided by Q260 and H263. Residues E327 and H328 each act as proton acceptor in the active site. Residues H328, D361, E415, and H420 each contribute to the substrate site. Residue D361 coordinates Zn(2+). H420 contributes to the Zn(2+) binding site.

This sequence belongs to the histidinol dehydrogenase family. As to quaternary structure, homodimer. Requires Zn(2+) as cofactor.

It catalyses the reaction L-histidinol + 2 NAD(+) + H2O = L-histidine + 2 NADH + 3 H(+). The protein operates within amino-acid biosynthesis; L-histidine biosynthesis; L-histidine from 5-phospho-alpha-D-ribose 1-diphosphate: step 9/9. Functionally, catalyzes the sequential NAD-dependent oxidations of L-histidinol to L-histidinaldehyde and then to L-histidine. This Buchnera aphidicola subsp. Schizaphis graminum (strain Sg) protein is Histidinol dehydrogenase (hisD).